The chain runs to 249 residues: Type III pantothenate kinase (249 aa).

6-13 is an ATP binding site; that stretch reads DCGNSFIK. Residues Y93 and 100–103 contribute to the substrate site; that span reads GLDR. D102 functions as the Proton acceptor in the catalytic mechanism. Residue D122 coordinates K(+). T125 provides a ligand contact to ATP. T181 lines the substrate pocket.

This sequence belongs to the type III pantothenate kinase family. Homodimer. Requires NH4(+) as cofactor. It depends on K(+) as a cofactor.

The protein localises to the cytoplasm. The catalysed reaction is (R)-pantothenate + ATP = (R)-4'-phosphopantothenate + ADP + H(+). The protein operates within cofactor biosynthesis; coenzyme A biosynthesis; CoA from (R)-pantothenate: step 1/5. Functionally, catalyzes the phosphorylation of pantothenate (Pan), the first step in CoA biosynthesis. The sequence is that of Type III pantothenate kinase from Pseudomonas savastanoi pv. phaseolicola (strain 1448A / Race 6) (Pseudomonas syringae pv. phaseolicola (strain 1448A / Race 6)).